Here is a 396-residue protein sequence, read N- to C-terminus: Ribosomal RNA large subunit methyltransferase I (396 aa).

Residues 2–81 enclose the PUA domain; it reads SVRLVLAKGR…ETIDIAFFTR (80 aa).

It belongs to the methyltransferase superfamily. RlmI family.

The protein localises to the cytoplasm. It carries out the reaction cytidine(1962) in 23S rRNA + S-adenosyl-L-methionine = 5-methylcytidine(1962) in 23S rRNA + S-adenosyl-L-homocysteine + H(+). Its function is as follows. Specifically methylates the cytosine at position 1962 (m5C1962) of 23S rRNA. The protein is Ribosomal RNA large subunit methyltransferase I of Cronobacter sakazakii (strain ATCC BAA-894) (Enterobacter sakazakii).